We begin with the raw amino-acid sequence, 475 residues long: tRNA-2-methylthio-N(6)-dimethylallyladenosine synthase (475 aa).

The 118-residue stretch at 2–119 folds into the MTTase N-terminal domain; it reads AKLHITTWGC…LPEMINQIRS (118 aa). [4Fe-4S] cluster is bound by residues Cys11, Cys48, Cys82, Cys156, Cys160, and Cys163. In terms of domain architecture, Radical SAM core spans 142-374; sequence KAEGPTAFVS…QQRINHQAMQ (233 aa). In terms of domain architecture, TRAM spans 377–440; that stretch reads RLMLGTEQRI…SNSLRGEVIR (64 aa).

This sequence belongs to the methylthiotransferase family. MiaB subfamily. As to quaternary structure, monomer. [4Fe-4S] cluster is required as a cofactor.

It is found in the cytoplasm. The catalysed reaction is N(6)-dimethylallyladenosine(37) in tRNA + (sulfur carrier)-SH + AH2 + 2 S-adenosyl-L-methionine = 2-methylsulfanyl-N(6)-dimethylallyladenosine(37) in tRNA + (sulfur carrier)-H + 5'-deoxyadenosine + L-methionine + A + S-adenosyl-L-homocysteine + 2 H(+). Catalyzes the methylthiolation of N6-(dimethylallyl)adenosine (i(6)A), leading to the formation of 2-methylthio-N6-(dimethylallyl)adenosine (ms(2)i(6)A) at position 37 in tRNAs that read codons beginning with uridine. This is tRNA-2-methylthio-N(6)-dimethylallyladenosine synthase from Haemophilus ducreyi (strain 35000HP / ATCC 700724).